Consider the following 224-residue polypeptide: ATP-dependent dethiobiotin synthetase BioD (224 aa).

12–17 serves as a coordination point for ATP; that stretch reads GVGKTF. Mg(2+) is bound at residue Thr16. Lys37 is an active-site residue. Thr41 lines the substrate pocket. Glu107 lines the Mg(2+) pocket. ATP contacts are provided by residues 107–110, 167–168, 197–199, and Glu204; these read EGAG, GS, and PEG.

It belongs to the dethiobiotin synthetase family. As to quaternary structure, homodimer. It depends on Mg(2+) as a cofactor.

The protein resides in the cytoplasm. The enzyme catalyses (7R,8S)-7,8-diammoniononanoate + CO2 + ATP = (4R,5S)-dethiobiotin + ADP + phosphate + 3 H(+). The protein operates within cofactor biosynthesis; biotin biosynthesis; biotin from 7,8-diaminononanoate: step 1/2. Functionally, catalyzes a mechanistically unusual reaction, the ATP-dependent insertion of CO2 between the N7 and N8 nitrogen atoms of 7,8-diaminopelargonic acid (DAPA, also called 7,8-diammoniononanoate) to form a ureido ring. This Corynebacterium glutamicum (strain R) protein is ATP-dependent dethiobiotin synthetase BioD.